Here is a 403-residue protein sequence, read N- to C-terminus: Metacaspase-7 (403 aa).

Residues His86 and Cys139 contribute to the active site. The residue at position 139 (Cys139) is an S-nitrosocysteine.

The protein belongs to the peptidase C14B family. Proteolytically processed; by an autocatalytic mechanism. Expressed in roots, flowers and siliques.

The chain is Metacaspase-7 (AMC7) from Arabidopsis thaliana (Mouse-ear cress).